The following is a 99-amino-acid chain: Transcriptional regulator WhiB2 (99 aa).

Residues 33 to 90 (LCAQTDPEAFFPEKGGSTRDAKRVCAKCEVREQCLKWAIDHDERFGIWGGMSERERRR) form the 4Fe-4S Wbl-type domain. [4Fe-4S] cluster is bound by residues Cys-34, Cys-57, Cys-60, and Cys-66.

It belongs to the WhiB family. It depends on [4Fe-4S] cluster as a cofactor. In terms of processing, the Fe-S cluster can be nitrosylated by nitric oxide (NO). Post-translationally, upon Fe-S cluster removal intramolecular disulfide bonds are formed.

The protein resides in the cytoplasm. In terms of biological role, acts as a transcriptional regulator. Probably redox-responsive. The apo- but not holo-form probably binds DNA. In Bifidobacterium longum (strain NCC 2705), this protein is Transcriptional regulator WhiB2 (whiB2).